Here is a 364-residue protein sequence, read N- to C-terminus: DNA replication and repair protein RecF (364 aa).

Residue 30 to 37 (GNNGQGKT) participates in ATP binding.

This sequence belongs to the RecF family.

Its subcellular location is the cytoplasm. Functionally, the RecF protein is involved in DNA metabolism; it is required for DNA replication and normal SOS inducibility. RecF binds preferentially to single-stranded, linear DNA. It also seems to bind ATP. The chain is DNA replication and repair protein RecF from Citrifermentans bemidjiense (strain ATCC BAA-1014 / DSM 16622 / JCM 12645 / Bem) (Geobacter bemidjiensis).